We begin with the raw amino-acid sequence, 196 residues long: Peroxiredoxin TSA2 (196 aa).

The region spanning 3–161 (AEVQKQAPPF…ALRLVEGFQW (159 aa)) is the Thioredoxin domain. Lysine 14 is covalently cross-linked (Glycyl lysine isopeptide (Lys-Gly) (interchain with G-Cter in ubiquitin)). The Cysteine sulfenic acid (-SOH) intermediate role is filled by cysteine 48. Glycyl lysine isopeptide (Lys-Gly) (interchain with G-Cter in ubiquitin) cross-links involve residues lysine 89 and lysine 132. A Phosphothreonine modification is found at threonine 174.

It belongs to the peroxiredoxin family. AhpC/Prx1 subfamily. Homodimer; disulfide-linked, upon oxidation.

The protein localises to the cytoplasm. It catalyses the reaction a hydroperoxide + [thioredoxin]-dithiol = an alcohol + [thioredoxin]-disulfide + H2O. Functionally, thiol-specific peroxidase that catalyzes the reduction of hydrogen peroxide and organic hydroperoxides to water and alcohols, respectively. Plays a role in cell protection against oxidative stress by detoxifying peroxides and as sensor of hydrogen peroxide-mediated signaling events. Can act alternatively as peroxidase and molecular chaperone. Oxidative stress and heat shock exposure cause a reversible shift of the protein structure from low MW species to high MW complexes, triggering a peroxidase-to-chaperone functional switch. The chaperone function of the protein enhances resistance to heat shock. In Saccharomyces cerevisiae (strain ATCC 204508 / S288c) (Baker's yeast), this protein is Peroxiredoxin TSA2.